Consider the following 287-residue polypeptide: UBX domain-containing protein 1 (287 aa).

Positions 1-42 (MAECSTLESLIEMGFSPSRAEKALAATGNQGIEPAMDWLVEH) constitute a UBA domain. The interval 44-207 (DDPDIDEPSV…VQEPPTKKEY (164 aa)) is disordered. 2 stretches are compositionally biased toward basic and acidic residues: residues 72–114 (CEER…EQEK) and 129–169 (KIQE…ERAR). Residues 72-164 (CEERLPLTEE…RVREKIARDK (93 aa)) adopt a coiled-coil conformation. Low complexity predominate over residues 176–197 (SEPISPPAEASIPATTPSPSSP). A UBX domain is found at 205 to 284 (KEYDQCRIQV…GLVPSAVLIV (80 aa)).

Its subcellular location is the cytoplasm. Its function is as follows. Component of a complex required to couple deglycosylation and proteasome-mediated degradation of misfolded proteins in the endoplasmic reticulum that are retrotranslocated in the cytosol. Involved in ubiquitin-proteasome systems. The sequence is that of UBX domain-containing protein 1 (ubxn1) from Xenopus tropicalis (Western clawed frog).